The following is a 126-amino-acid chain: Fluoride-specific ion channel FluC (126 aa).

Transmembrane regions (helical) follow at residues 35–55 (WWTL…IGLL), 71–91 (VGML…WLLF), and 101–121 (LYVV…MILI). Na(+) contacts are provided by Gly-75 and Thr-78.

The protein belongs to the fluoride channel Fluc/FEX (TC 1.A.43) family.

The protein resides in the cell inner membrane. It carries out the reaction fluoride(in) = fluoride(out). Na(+) is not transported, but it plays an essential structural role and its presence is essential for fluoride channel function. Fluoride-specific ion channel. Important for reducing fluoride concentration in the cell, thus reducing its toxicity. This chain is Fluoride-specific ion channel FluC, found in Sphingopyxis alaskensis (strain DSM 13593 / LMG 18877 / RB2256) (Sphingomonas alaskensis).